A 186-amino-acid chain; its full sequence is Cytochrome c oxidase polypeptide 5, mitochondrial (186 aa).

A mitochondrion-targeting transit peptide spans 1–20 (MYLSKIICKKVPMKLLCTRN). Topologically, residues 21–107 (AATVSAAATN…GPRAFSHISQ (87 aa)) are mitochondrial matrix. The chain crosses the membrane as a helical span at residues 108–128 (KTVFWGTVAGLTIGVVLFGLI). The Mitochondrial intermembrane segment spans residues 129–186 (RTQAAPSPRTMTREWQEKSNEYMKENKINPISGEASEGFKGRGQISGGIFSPSEKDKK). The tract at residues 149 to 186 (EYMKENKINPISGEASEGFKGRGQISGGIFSPSEKDKK) is disordered.

Belongs to the cytochrome c oxidase IV family. Component of the cytochrome c oxidase (complex IV, CIV), a multisubunit enzyme composed of a catalytic core of 3 subunits and seevral supernumerary subunits. The complex exists as a monomer or a dimer and forms supercomplexes (SCs) in the inner mitochondrial membrane with ubiquinol-cytochrome c oxidoreductase (cytochrome b-c1 complex, complex III, CIII).

It localises to the mitochondrion inner membrane. It functions in the pathway energy metabolism; oxidative phosphorylation. In terms of biological role, component of the cytochrome c oxidase, the last enzyme in the mitochondrial electron transport chain which drives oxidative phosphorylation. The respiratory chain contains 3 multisubunit complexes succinate dehydrogenase (complex II, CII), ubiquinol-cytochrome c oxidoreductase (cytochrome b-c1 complex, complex III, CIII) and cytochrome c oxidase (complex IV, CIV), that cooperate to transfer electrons derived from NADH and succinate to molecular oxygen, creating an electrochemical gradient over the inner membrane that drives transmembrane transport and the ATP synthase. Cytochrome c oxidase is the component of the respiratory chain that catalyzes the reduction of oxygen to water. Electrons originating from reduced cytochrome c in the intermembrane space (IMS) are transferred via the dinuclear copper A center (CU(A)) of subunit 2 and heme A of subunit 1 to the active site in subunit 1, a binuclear center (BNC) formed by heme A3 and copper B (CU(B)). The BNC reduces molecular oxygen to 2 water molecules using 4 electrons from cytochrome c in the IMS and 4 protons from the mitochondrial matrix. In Schizosaccharomyces pombe (strain 972 / ATCC 24843) (Fission yeast), this protein is Cytochrome c oxidase polypeptide 5, mitochondrial (cox5).